A 100-amino-acid polypeptide reads, in one-letter code: UPF0213 protein YhbQ (100 aa).

The region spanning 2-77 (TPWFLYLIRT…KQLTKRQKER (76 aa)) is the GIY-YIG domain.

It belongs to the UPF0213 family.

In Escherichia coli O1:K1 / APEC, this protein is UPF0213 protein YhbQ.